The primary structure comprises 164 residues: Interferon gamma (164 aa).

Residues 1–19 (MTCQTYNLFVLSVIMIYYG) form the signal peptide. N-linked (GlcNAc...) asparagine glycans are attached at residues N42 and N61.

It belongs to the type II (or gamma) interferon family. Homodimer.

Its subcellular location is the secreted. Functionally, produced by lymphocytes activated by specific antigens or mitogens. IFN-gamma, in addition to having antiviral activity, has important immunoregulatory functions. It is a potent activator of macrophages, it has antiproliferative effects on transformed cells and it can potentiate the antiviral and antitumor effects of the type I interferons. This is Interferon gamma (IFNG) from Gallus gallus (Chicken).